Here is a 742-residue protein sequence, read N- to C-terminus: MELQNDLESLDNELNDFSEDPFRDDFITDEDAVRSGWRSAWTRMKYWFYKNRLKWTNNPIVIGDAKDSRDGSNFRRGIPLYELDANGQPIDTELVDENELSFGTGFHSKVPFKIIFRTLFGSLVFAIFLILMINIAKPHHSTRVLSHFGSPEFDPYVKYFNGTHEFFPLTIVISLDGFHPSLISKRNTPFLHDLYELKYDGGMNITSTPFMVPSFPTETFPNHWTLVTGQYPIHHGIVSNVFWDPDLNEEFHPGVLDPRIWNNNDTEPIWQTVQSAFDGDIPFKAATHMWPGSDVNYTKYNEEKLQPEHKNPIARERTPFYFDEFNAKEPLSQKLSKIIEYVDMSTLNERPQLILGYVPNVDAFGHKHGYPSESEYYYEDFTETLGEVDTFLKQLVESLQERNLTSFTNLVIVSDHGMSDIVVPSNVIIWEDLLDEKLRKDYVSHAYLEGPMMAISLKDSGNINEVYHNLKTSIDEDKYTVYVNGNFPKEWNFNDGKNHHMASIWIVPEPGYAVMKKEQLKKVAKGDHKDKNEDNVFTIGSHGYDNNAIDMRSVFIGMGPYFPQGYIEPFQNTEIYNLLCDICGVAEKDRNSNDGTGMLMNQLREPQSSEEVEIEDDFDYLVSKFGEFSTYNIIWGGYPEETEQDNVDNDNDDNDDGNTDEIAAMPSSSLTIKLEMTTSIPSATETLLGETSPSSRSSSSSSIQASATASTVGDWLQDIINDAKDLIDDIIDSIDDLVDSDT.

The Cytoplasmic segment spans residues 1 to 113; that stretch reads MELQNDLESL…TGFHSKVPFK (113 aa). The helical transmembrane segment at 114-134 threads the bilayer; the sequence is IIFRTLFGSLVFAIFLILMIN. The Extracellular segment spans residues 135–742; sequence IAKPHHSTRV…SIDDLVDSDT (608 aa). N-linked (GlcNAc...) asparagine glycans are attached at residues N161 and N204. A phosphodiesterase region spans residues 168 to 545; the sequence is PLTIVISLDG…VFTIGSHGYD (378 aa). Residue T219 is the Nucleophile of the active site. N264, N296, and N403 each carry an N-linked (GlcNAc...) asparagine glycan. The segment covering 640 to 659 has biased composition (acidic residues); the sequence is EETEQDNVDNDNDDNDDGNT. Disordered stretches follow at residues 640–670 and 686–711; these read EETEQDNVDNDNDDNDDGNTDEIAAMPSSSL and TLLGETSPSSRSSSSSSIQASATAST. A compositionally biased stretch (low complexity) spans 691 to 711; sequence TSPSSRSSSSSSIQASATAST.

It belongs to the nucleotide pyrophosphatase/phosphodiesterase family. Post-translationally, autophosphorylated as part of the catalytic cycle of phosphodiesterase/pyrophosphatase activity. N-glycosylated.

The protein localises to the membrane. The catalysed reaction is Hydrolytically removes 5'-nucleotides successively from the 3'-hydroxy termini of 3'-hydroxy-terminated oligonucleotides.. It catalyses the reaction a ribonucleoside 5'-triphosphate + H2O = a ribonucleoside 5'-phosphate + diphosphate + H(+). It carries out the reaction a 2'-deoxyribonucleoside 5'-triphosphate + H2O = a 2'-deoxyribonucleoside 5'-phosphate + diphosphate + H(+). Its function is as follows. Mediates extracellular nucleotide derived phosphate hydrolysis along with NPP2 and PHO5. The polypeptide is Ectonucleotide pyrophosphatase/phosphodiesterase 1 (NPP1) (Saccharomyces cerevisiae (strain ATCC 204508 / S288c) (Baker's yeast)).